Consider the following 198-residue polypeptide: MSESSGTAFGGRRAIPPNTSNAAENDPPTVELQGLVPRGFNPQDYLNVTNVHLFKERWDSNKVDHHTDKYSNDKLIVRRGQSFYIQIDFNRPYDPTRDLFRVEYVIGLYPQENKGTYIPVPLVSELQSGKWGAKVVMREDRSVRLSVQSSADCIVGKFRMYVAVWTPYGVIRTSRNPETDTYILFNPWCEEDAVYLEN.

Positions 1–36 (MSESSGTAFGGRRAIPPNTSNAAENDPPTVELQGLV) are disordered. At Ser2 the chain carries N-acetylserine. The propeptide at 2 to 38 (SESSGTAFGGRRAIPPNTSNAAENDPPTVELQGLVPR) is activation peptide.

This sequence belongs to the transglutaminase superfamily. Transglutaminase family. Tetramer of two A chains (F13A1) and two B (F13B) chains. Requires Ca(2+) as cofactor. Post-translationally, the activation peptide is released by thrombin.

It localises to the cytoplasm. The protein resides in the secreted. The catalysed reaction is L-glutaminyl-[protein] + L-lysyl-[protein] = [protein]-L-lysyl-N(6)-5-L-glutamyl-[protein] + NH4(+). Factor XIII is activated by thrombin and calcium ion to a transglutaminase that catalyzes the formation of gamma-glutamyl-epsilon-lysine cross-links between fibrin chains, thus stabilizing the fibrin clot. Also cross-link alpha-2-plasmin inhibitor, or fibronectin, to the alpha chains of fibrin. This Bos taurus (Bovine) protein is Coagulation factor XIII A chain (F13A1).